The following is a 173-amino-acid chain: Superoxide dismutase [Cu-Zn] (173 aa).

The first 19 residues, 1–19, serve as a signal peptide directing secretion; that stretch reads MKSLFIASTMVLMAFPAFA. Residues His-67, His-69, and His-92 each contribute to the Cu cation site. Cys-74 and Cys-169 are disulfide-bonded. Residues His-92, His-101, His-109, and Asp-112 each contribute to the Zn(2+) site. Residue His-147 coordinates Cu cation.

It belongs to the Cu-Zn superoxide dismutase family. In terms of assembly, homodimer. The cofactor is Cu cation. Zn(2+) serves as cofactor.

The protein localises to the periplasm. It carries out the reaction 2 superoxide + 2 H(+) = H2O2 + O2. Functionally, destroys radicals which are normally produced within the cells and which are toxic to biological systems. The chain is Superoxide dismutase [Cu-Zn] (sodC) from Brucella abortus biovar 1 (strain 9-941).